A 186-amino-acid polypeptide reads, in one-letter code: Translation initiation factor IF-3 (186 aa).

The disordered stretch occupies residues 1 to 21 (MINRSSGKDRDRSRSGDKELR).

The protein belongs to the IF-3 family. Monomer.

The protein localises to the cytoplasm. IF-3 binds to the 30S ribosomal subunit and shifts the equilibrium between 70S ribosomes and their 50S and 30S subunits in favor of the free subunits, thus enhancing the availability of 30S subunits on which protein synthesis initiation begins. This Borrelia turicatae (strain 91E135) protein is Translation initiation factor IF-3.